Consider the following 499-residue polypeptide: Putative antiporter subunit mnhD2 (499 aa).

14 helical membrane passes run Leu3–Phe23, Tyr33–Val53, Leu79–Phe99, Tyr109–Ser129, Leu131–Leu151, Ile162–Leu182, Ile210–Leu230, Leu241–Phe261, Ile272–Ile292, Ile309–Phe329, Leu331–Ile351, Phe370–Phe390, Gly404–Phe424, and Ile452–Asn472.

The protein belongs to the CPA3 antiporters (TC 2.A.63) subunit D family. In terms of assembly, may form a heterooligomeric complex that consists of seven subunits: mnhA2, mnhB2, mnhC2, mnhD2, mnhE2, mnhF2 and mnhG2.

It is found in the cell membrane. Functionally, expression of the mnh2 operon in E.coli is not able to catalyze Na(+)Li(+)/H(+) antiport. It does however confer higher growth rates than the control strain at up to pH 9.5. The operon may encode an NADH-ubiquinone oxidoreductase. The chain is Putative antiporter subunit mnhD2 (mnhD2) from Staphylococcus aureus.